The following is a 295-amino-acid chain: Indole-3-glycerol phosphate synthase (295 aa).

Belongs to the TrpC family.

It carries out the reaction 1-(2-carboxyphenylamino)-1-deoxy-D-ribulose 5-phosphate + H(+) = (1S,2R)-1-C-(indol-3-yl)glycerol 3-phosphate + CO2 + H2O. It participates in amino-acid biosynthesis; L-tryptophan biosynthesis; L-tryptophan from chorismate: step 4/5. This Prochlorococcus marinus (strain AS9601) protein is Indole-3-glycerol phosphate synthase.